Here is a 508-residue protein sequence, read N- to C-terminus: Photosystem II CP47 reaction center protein (508 aa).

6 consecutive transmembrane segments (helical) span residues A21–S36, I101–W115, G140–F156, I203–S218, V237–V252, and W457–R472.

Belongs to the PsbB/PsbC family. PsbB subfamily. PSII is composed of 1 copy each of membrane proteins PsbA, PsbB, PsbC, PsbD, PsbE, PsbF, PsbH, PsbI, PsbJ, PsbK, PsbL, PsbM, PsbT, PsbX, PsbY, PsbZ, Psb30/Ycf12, at least 3 peripheral proteins of the oxygen-evolving complex and a large number of cofactors. It forms dimeric complexes. Binds multiple chlorophylls. PSII binds additional chlorophylls, carotenoids and specific lipids. serves as cofactor.

The protein localises to the plastid. It is found in the chloroplast thylakoid membrane. Functionally, one of the components of the core complex of photosystem II (PSII). It binds chlorophyll and helps catalyze the primary light-induced photochemical processes of PSII. PSII is a light-driven water:plastoquinone oxidoreductase, using light energy to abstract electrons from H(2)O, generating O(2) and a proton gradient subsequently used for ATP formation. In Nephroselmis olivacea (Green alga), this protein is Photosystem II CP47 reaction center protein.